A 589-amino-acid chain; its full sequence is Probable galacturonosyltransferase 6 (589 aa).

The Cytoplasmic portion of the chain corresponds to 1-6 (MKQIRR). A helical; Signal-anchor for type II membrane protein membrane pass occupies residues 7–27 (WQRILILALLSISVFAPLIFV). The Lumenal portion of the chain corresponds to 28–589 (SNRLKSITPV…TYLQQCNLQA (562 aa)). N-linked (GlcNAc...) asparagine glycosylation is found at Asn-83 and Asn-126. The tract at residues 127–151 (KTDFKPPLSKGEKNTRVQPDRATDV) is disordered. Residues 136 to 151 (KGEKNTRVQPDRATDV) are compositionally biased toward basic and acidic residues. Residues Asn-317 and Asn-454 are each glycosylated (N-linked (GlcNAc...) asparagine).

Belongs to the glycosyltransferase 8 family. Expressed in roots, inflorescences, siliques, leaves and stems.

The protein resides in the golgi apparatus membrane. It functions in the pathway glycan metabolism; pectin biosynthesis. Functionally, probably involved in pectin biosynthesis in cell walls. The chain is Probable galacturonosyltransferase 6 (GAUT6) from Arabidopsis thaliana (Mouse-ear cress).